We begin with the raw amino-acid sequence, 183 residues long: Transmembrane protein 52B (183 aa).

An N-terminal signal peptide occupies residues 1–24; it reads MGVRVHVVAASALLYFILLSGTRC. A helical membrane pass occupies residues 40-60; sequence VHLWYIWLLVVIGALLLLCGL. The tract at residues 158-183 is disordered; it reads DLPPVPEEKQLPPTEKESTRIVDSWN. Basic and acidic residues predominate over residues 163 to 177; the sequence is PEEKQLPPTEKESTR.

The protein localises to the membrane. The chain is Transmembrane protein 52B (TMEM52B) from Homo sapiens (Human).